A 217-amino-acid polypeptide reads, in one-letter code: Large ribosomal subunit protein uL1 (217 aa).

The protein belongs to the universal ribosomal protein uL1 family. As to quaternary structure, part of the 50S ribosomal subunit.

Functionally, binds directly to 23S rRNA. The L1 stalk is quite mobile in the ribosome, and is involved in E site tRNA release. Its function is as follows. Protein L1 is also a translational repressor protein, it controls the translation of the L11 operon by binding to its mRNA. The sequence is that of Large ribosomal subunit protein uL1 from Wolbachia pipientis wMel.